The chain runs to 42 residues: Photosystem I reaction center subunit IX (42 aa).

Residues 7-27 (YLSTAPVLAAVWFTVLAGILI) form a helical membrane-spanning segment.

It belongs to the PsaJ family.

The protein resides in the plastid. It is found in the chloroplast thylakoid membrane. May help in the organization of the PsaE and PsaF subunits. This Ostreococcus tauri protein is Photosystem I reaction center subunit IX.